Reading from the N-terminus, the 224-residue chain is F420-dependent NADP reductase (224 aa).

NADP(+) contacts are provided by residues 9–12 (TGDQ), 31–32 (SR), lysine 36, valine 74, valine 100, and alanine 145.

Belongs to the F420-dependent NADP reductase family. As to quaternary structure, homotetramer.

The enzyme catalyses reduced coenzyme F420-(gamma-L-Glu)(n) + NADP(+) = oxidized coenzyme F420-(gamma-L-Glu)(n) + NADPH + 2 H(+). In terms of biological role, catalyzes the reduction of NADP(+) with F420H(2) via hydride transfer, and the reverse reaction, i.e. the reduction of F420 with NADPH. Probably functions in the regeneration of NADPH required in biosynthetic reactions. The sequence is that of F420-dependent NADP reductase from Methanothermobacter marburgensis (strain ATCC BAA-927 / DSM 2133 / JCM 14651 / NBRC 100331 / OCM 82 / Marburg) (Methanobacterium thermoautotrophicum).